Here is a 93-residue protein sequence, read N- to C-terminus: UPF0521 protein A (93 aa).

Positions 2-58 form a coiled coil; that stretch reads SLKEVITSLKNDFHSINKEIDSMKENNEKQEDKIFQEIKKLKLEMELLRKDNLSFKT.

It belongs to the UPF0521 family.

The protein is UPF0521 protein A of Dictyostelium discoideum (Social amoeba).